Reading from the N-terminus, the 156-residue chain is ATP synthase subunit b (156 aa).

Residues 7-29 (LFAQMVVFLVLAWFTMKFVWPPL) traverse the membrane as a helical segment.

Belongs to the ATPase B chain family. In terms of assembly, F-type ATPases have 2 components, F(1) - the catalytic core - and F(0) - the membrane proton channel. F(1) has five subunits: alpha(3), beta(3), gamma(1), delta(1), epsilon(1). F(0) has three main subunits: a(1), b(2) and c(10-14). The alpha and beta chains form an alternating ring which encloses part of the gamma chain. F(1) is attached to F(0) by a central stalk formed by the gamma and epsilon chains, while a peripheral stalk is formed by the delta and b chains.

The protein resides in the cell inner membrane. F(1)F(0) ATP synthase produces ATP from ADP in the presence of a proton or sodium gradient. F-type ATPases consist of two structural domains, F(1) containing the extramembraneous catalytic core and F(0) containing the membrane proton channel, linked together by a central stalk and a peripheral stalk. During catalysis, ATP synthesis in the catalytic domain of F(1) is coupled via a rotary mechanism of the central stalk subunits to proton translocation. In terms of biological role, component of the F(0) channel, it forms part of the peripheral stalk, linking F(1) to F(0). This chain is ATP synthase subunit b, found in Burkholderia cenocepacia (strain ATCC BAA-245 / DSM 16553 / LMG 16656 / NCTC 13227 / J2315 / CF5610) (Burkholderia cepacia (strain J2315)).